The following is a 934-amino-acid chain: 3-hydroxy-3-methylglutaryl-coenzyme A reductase (934 aa).

Residues 1-111 (MFYHGASANQ…VLNLVRGAET (111 aa)) are Lumenal-facing. Residues 112 to 132 (FDIALVTCAYIAMFYTLFNLF) traverse the membrane as a helical segment. One can recognise an SSD domain in the interval 113–280 (DIALVTCAYI…STFLSAILSL (168 aa)). Residues 133–141 (ARMRAVGSK) are Cytoplasmic-facing. The helical transmembrane segment at 142–162 (VWLGLSTLVSSFFAFLFALYI) threads the bilayer. Topologically, residues 163–168 (TTRVLD) are lumenal. Residues 169 to 189 (LSIPFLSLSEGIPFFVAVVGF) traverse the membrane as a helical segment. Over 190 to 231 (NNKILLAEKVLQNQLNAQSSKNDAPTVLYQALREQGPLLLRD) the chain is Cytoplasmic. Residues 232-252 (HLFMITAFLGCSFYASYLDGL) form a helical membrane-spanning segment. Over 253–256 (KNFC) the chain is Lumenal. Residues 257–277 (ILAALILAFDILTTSTFLSAI) form a helical membrane-spanning segment. The Cytoplasmic segment spans residues 278–334 (LSLKLEINQIHRSTLLREQLEDDGLTETTVDDVLKSNSLAGTKTFTDAPSTLVTVAK). A helical membrane pass occupies residues 335-355 (VAGVSVFFGLHFYGFGSAWLS). The Lumenal portion of the chain corresponds to 356-421 (DLSAGNETND…GLISTAARDK (66 aa)). 3 N-linked (GlcNAc...) asparagine glycosylation sites follow: Asn-361, Asn-364, and Asn-382. Residues 422–442 (YISKFILFAFAVSASINVYLL) traverse the membrane as a helical segment. At 443 to 934 (NVARIHTTRL…MQHNRAAAKK (492 aa)) the chain is on the cytoplasmic side. The active-site Charge relay system is Glu-618. 624–630 (SAMRGCK) contacts CoA. NADP(+) contacts are provided by residues 685-687 (SRF) and 712-720 (DAMGMNMIS). The Charge relay system role is filled by Lys-752. 781–783 (VLK) contributes to the CoA binding site. Residue Asp-828 is the Charge relay system of the active site. 923-924 (SH) is a binding site for CoA. His-924 acts as the Proton donor in catalysis. 928-929 (NR) lines the NADP(+) pocket.

The protein belongs to the HMG-CoA reductase family.

The protein localises to the endoplasmic reticulum membrane. The enzyme catalyses (R)-mevalonate + 2 NADP(+) + CoA = (3S)-3-hydroxy-3-methylglutaryl-CoA + 2 NADPH + 2 H(+). The protein operates within metabolic intermediate biosynthesis; (R)-mevalonate biosynthesis; (R)-mevalonate from acetyl-CoA: step 3/3. In terms of biological role, HMG-CoA reductase; part of the first module of ergosterol biosynthesis pathway that includes the early steps of the pathway, conserved across all eukaryotes, and which results in the formation of mevalonate from acetyl-coenzyme A (acetyl-CoA). In this module, the cytosolic acetyl-CoA acetyltransferase catalyzes the formation of acetoacetyl-CoA. The hydroxymethylglutaryl-CoA synthase then condenses acetyl-CoA with acetoacetyl-CoA to form HMG-CoA. The rate-limiting step of the early module is the reduction to mevalonate by the 3-hydroxy-3-methylglutaryl-coenzyme A (HMG-CoA) reductase. The protein is 3-hydroxy-3-methylglutaryl-coenzyme A reductase of Cyberlindnera jadinii (Torula yeast).